Reading from the N-terminus, the 233-residue chain is LOB domain-containing protein 40 (233 aa).

The LOB domain occupies 3-109; the sequence is MSCNGCRVLR…VEAVMRGSPV (107 aa). Over residues 143 to 160 the composition is skewed to basic and acidic residues; that stretch reads KRRSRGACKEERNVRSLS. The interval 143–183 is disordered; the sequence is KRRSRGACKEERNVRSLSHESSLSHESPVSSEETTTEEPKT. Residues 161-175 are compositionally biased toward low complexity; that stretch reads HESSLSHESPVSSEE.

The protein belongs to the LOB domain-containing protein family. Expressed in roots and flowers.

This Arabidopsis thaliana (Mouse-ear cress) protein is LOB domain-containing protein 40 (LBD40).